A 355-amino-acid polypeptide reads, in one-letter code: 3-dehydroquinate synthase (355 aa).

NAD(+) contacts are provided by residues 98–102 (GVVGD), 122–123 (TT), Lys-135, Lys-144, and 162–165 (TLDT). Residues Glu-177, His-240, and His-257 each contribute to the Zn(2+) site.

The protein belongs to the sugar phosphate cyclases superfamily. Dehydroquinate synthase family. Co(2+) is required as a cofactor. Zn(2+) serves as cofactor. It depends on NAD(+) as a cofactor.

It localises to the cytoplasm. The enzyme catalyses 7-phospho-2-dehydro-3-deoxy-D-arabino-heptonate = 3-dehydroquinate + phosphate. The protein operates within metabolic intermediate biosynthesis; chorismate biosynthesis; chorismate from D-erythrose 4-phosphate and phosphoenolpyruvate: step 2/7. Functionally, catalyzes the conversion of 3-deoxy-D-arabino-heptulosonate 7-phosphate (DAHP) to dehydroquinate (DHQ). The polypeptide is 3-dehydroquinate synthase (Dictyoglomus turgidum (strain DSM 6724 / Z-1310)).